The sequence spans 910 residues: Eukaryotic translation initiation factor 3 subunit C (910 aa).

The disordered stretch occupies residues 1–21 (MSRFFANGSESESESSEEEIQ). Residues 11 to 20 (SESESSEEEI) are compositionally biased toward acidic residues. Phosphoserine occurs at positions 34, 165, 176, and 185. A disordered region spans residues 157 to 279 (FREAPDQESE…IRKRAEDDED (123 aa)). Over residues 162–186 (DQESEAEDEVVALESDGGDAGDDSD) the composition is skewed to acidic residues. Positions 194–207 (AVPKAVKSAPAKAA) are enriched in low complexity. Acidic residues predominate over residues 209–235 (ADDDDSDDSIDWDSDSESETESSDDEN). The segment covering 240–268 (MRERFLKRTTEKEEKDDDKRKDKRKEQKT) has biased composition (basic and acidic residues). In terms of domain architecture, PCI spans 639 to 815 (FHMHINLELL…ETVGMHRSEP (177 aa)). The disordered stretch occupies residues 847–910 (FFQRGNMGNR…QQQVQTIDEE (64 aa)). Positions 862-874 (NRNQNNQGGNWLG) are enriched in low complexity. A compositionally biased stretch (basic residues) spans 882-891 (RNRNQRGHHK). The segment covering 895–910 (DRQQQQQQQVQTIDEE) has biased composition (low complexity).

It belongs to the eIF-3 subunit C family. Component of the eukaryotic translation initiation factor 3 (eIF-3) complex. The eIF-3 complex interacts with pix.

The protein localises to the cytoplasm. Functionally, component of the eukaryotic translation initiation factor 3 (eIF-3) complex, which is involved in protein synthesis of a specialized repertoire of mRNAs and, together with other initiation factors, stimulates binding of mRNA and methionyl-tRNAi to the 40S ribosome. The eIF-3 complex specifically targets and initiates translation of a subset of mRNAs involved in cell proliferation. The sequence is that of Eukaryotic translation initiation factor 3 subunit C from Drosophila melanogaster (Fruit fly).